Reading from the N-terminus, the 308-residue chain is Methionyl-tRNA formyltransferase (308 aa).

Residue 110 to 113 (SLLP) participates in (6S)-5,6,7,8-tetrahydrofolate binding.

The protein belongs to the Fmt family.

It catalyses the reaction L-methionyl-tRNA(fMet) + (6R)-10-formyltetrahydrofolate = N-formyl-L-methionyl-tRNA(fMet) + (6S)-5,6,7,8-tetrahydrofolate + H(+). Functionally, attaches a formyl group to the free amino group of methionyl-tRNA(fMet). The formyl group appears to play a dual role in the initiator identity of N-formylmethionyl-tRNA by promoting its recognition by IF2 and preventing the misappropriation of this tRNA by the elongation apparatus. The sequence is that of Methionyl-tRNA formyltransferase from Neisseria meningitidis serogroup C (strain 053442).